Reading from the N-terminus, the 349-residue chain is Biotin synthase (349 aa).

Positions 1-11 (MLEGIEREAAE) are enriched in basic and acidic residues. The segment at 1-30 (MLEGIEREAAEHSNGCSGPAGHAPPAGAPR) is disordered. The region spanning 64–283 (HEVQLCTLLS…IAVARVMMPR (220 aa)) is the Radical SAM core domain. The [4Fe-4S] cluster site is built by C79, C83, and C86. [2Fe-2S] cluster is bound by residues C123, C155, C215, and R287.

It belongs to the radical SAM superfamily. Biotin synthase family. As to quaternary structure, homodimer. [4Fe-4S] cluster serves as cofactor. It depends on [2Fe-2S] cluster as a cofactor.

The enzyme catalyses (4R,5S)-dethiobiotin + (sulfur carrier)-SH + 2 reduced [2Fe-2S]-[ferredoxin] + 2 S-adenosyl-L-methionine = (sulfur carrier)-H + biotin + 2 5'-deoxyadenosine + 2 L-methionine + 2 oxidized [2Fe-2S]-[ferredoxin]. Its pathway is cofactor biosynthesis; biotin biosynthesis; biotin from 7,8-diaminononanoate: step 2/2. Its function is as follows. Catalyzes the conversion of dethiobiotin (DTB) to biotin by the insertion of a sulfur atom into dethiobiotin via a radical-based mechanism. The polypeptide is Biotin synthase (Sorangium cellulosum (strain So ce56) (Polyangium cellulosum (strain So ce56))).